Consider the following 552-residue polypeptide: Chaperonin GroEL 3 (552 aa).

ATP contacts are provided by residues 30 to 33 (TLGP), Lys51, 87 to 91 (DGTTT), Gly415, and Asp495.

It belongs to the chaperonin (HSP60) family. Forms a cylinder of 14 subunits composed of two heptameric rings stacked back-to-back. Interacts with the co-chaperonin GroES.

Its subcellular location is the cytoplasm. It carries out the reaction ATP + H2O + a folded polypeptide = ADP + phosphate + an unfolded polypeptide.. In terms of biological role, together with its co-chaperonin GroES, plays an essential role in assisting protein folding. The GroEL-GroES system forms a nano-cage that allows encapsulation of the non-native substrate proteins and provides a physical environment optimized to promote and accelerate protein folding. The polypeptide is Chaperonin GroEL 3 (Mesorhizobium japonicum (strain LMG 29417 / CECT 9101 / MAFF 303099) (Mesorhizobium loti (strain MAFF 303099))).